Reading from the N-terminus, the 366-residue chain is Adenine DNA glycosylase (366 aa).

30-31 provides a ligand contact to DNA; sequence WR. The Proton donor/acceptor role is filled by Glu43. Residues 48–49, 86–88, Tyr126, and Glu188 each bind DNA; these read QT and LGY. Residues 105–133 enclose the HhH domain; sequence RYGGKVPDDPDEFSRLKGVGPYTVGAVLS. Residues Cys198, Cys205, Cys208, and Cys214 each contribute to the [4Fe-4S] cluster site. Residue Ser308 participates in DNA binding.

Belongs to the Nth/MutY family. [4Fe-4S] cluster is required as a cofactor.

It catalyses the reaction Hydrolyzes free adenine bases from 7,8-dihydro-8-oxoguanine:adenine mismatched double-stranded DNA, leaving an apurinic site.. Functionally, base excision repair (BER) glycosylase that initiates repair of A:oxoG to C:G by removing the inappropriately paired adenine base from the DNA backbone, generating an abasic site product. 8-oxoguanine (oxoG) is a genotoxic DNA lesion resulting from oxidation of guanine; this residue is misread by replicative DNA polymerases, that insert adenine instead of cytosine opposite the oxidized damaged base. Shows a powerful dicrimination of A versus C, since it does not cleave cytosine in oxoG:C pairs. May also be able to remove adenine from A:G mispairs, although this activity may not be physiologically relevant. The protein is Adenine DNA glycosylase of Geobacillus stearothermophilus (Bacillus stearothermophilus).